A 1359-amino-acid polypeptide reads, in one-letter code: Regulatory-associated protein of TOR 2 (1359 aa).

2 disordered regions span residues 17 to 64 (SSAA…PQVA) and 782 to 819 (SDNS…QHSD). Basic and acidic residues predominate over residues 32-50 (HLVDDHLPVENGPDPRRDV). Positions 782–805 (SDNSATARDGRISTSSPIATNSIM) are enriched in polar residues. Positions 806–819 (HGSPQSDDSSQHSD) are enriched in low complexity. WD repeat units follow at residues 1041 to 1080 (RFEL…PVNT), 1087 to 1127 (SDRG…GGQK), 1139 to 1178 (RSAG…VNTI), 1181 to 1221 (TADS…RLVY), 1228 to 1269 (PRSE…EPYL), 1273 to 1312 (AHRG…LTII), and 1321 to 1359 (QRIG…YQVR).

This sequence belongs to the WD repeat RAPTOR family. The target of rapamycin complex 1 (TORC1) is composed of at least RAPTOR, LST8 and TOR.

Component of TORC1 complex, which is an essential cell growth regulator that controls plant development. Acts by recruiting substrates for TOR. Acts by activating transcription, protein synthesis and ribosome biogenesis, and inhibiting mRNA degradation and autophagy. This chain is Regulatory-associated protein of TOR 2 (RAPTOR2), found in Oryza sativa subsp. japonica (Rice).